The chain runs to 357 residues: DNA replication and repair protein RecF (357 aa).

30–37 (GANGSGKT) is a binding site for ATP.

It belongs to the RecF family.

The protein localises to the cytoplasm. The RecF protein is involved in DNA metabolism; it is required for DNA replication and normal SOS inducibility. RecF binds preferentially to single-stranded, linear DNA. It also seems to bind ATP. This chain is DNA replication and repair protein RecF, found in Escherichia coli O139:H28 (strain E24377A / ETEC).